Here is a 676-residue protein sequence, read N- to C-terminus: Double-stranded RNA-specific editase Adar (676 aa).

The interval 1–51 (MKFDSRVMLNSANNNSPQHPVSAPSDINMNGYNRKLPQKRGYEMPKYSDPK) is disordered. Over residues 8-31 (MLNSANNNSPQHPVSAPSDINMNG) the composition is skewed to polar residues. Over residues 40–51 (RGYEMPKYSDPK) the composition is skewed to basic and acidic residues. DRBM domains lie at 61–127 (QPKN…SFIQ) and 197–272 (ITVD…SLCN). In terms of domain architecture, A to I editase spans 348–672 (SVSTGTKCVS…LKKPIEQDEF (325 aa)). Position 372 (His372) interacts with Zn(2+). The active-site Proton donor is the Glu374. Zn(2+) is bound by residues Cys430 and Cys493.

In terms of tissue distribution, expressed in embryonic nervous system; late stage 13 sees ventral nerve cord expression which spreads to brain by stage 16. Expression is maintained through to adulthood.

Functionally, has A-to-I RNA editing activity on extended dsRNA: edits RNA-binding protein Rnp4F. A-to-I editing of pre-mRNAs acts predominantly through nervous system targets to affect adult nervous system integrity, function and behavior. Essential for adaptation to environmental stresses, such as oxygen deprivation, and for the prevention of premature neuronal degeneration, through the editing of ion channels as targets. In Drosophila melanogaster (Fruit fly), this protein is Double-stranded RNA-specific editase Adar.